A 297-amino-acid polypeptide reads, in one-letter code: tRNA dimethylallyltransferase (297 aa).

9–16 (GPTASGKS) is an ATP binding site. Residue 11–16 (TASGKS) participates in substrate binding. 2 interaction with substrate tRNA regions span residues 34-37 (DSMQ) and 155-159 (QRVIR).

Belongs to the IPP transferase family. Monomer. Mg(2+) serves as cofactor.

The enzyme catalyses adenosine(37) in tRNA + dimethylallyl diphosphate = N(6)-dimethylallyladenosine(37) in tRNA + diphosphate. In terms of biological role, catalyzes the transfer of a dimethylallyl group onto the adenine at position 37 in tRNAs that read codons beginning with uridine, leading to the formation of N6-(dimethylallyl)adenosine (i(6)A). The protein is tRNA dimethylallyltransferase of Leuconostoc mesenteroides subsp. mesenteroides (strain ATCC 8293 / DSM 20343 / BCRC 11652 / CCM 1803 / JCM 6124 / NCDO 523 / NBRC 100496 / NCIMB 8023 / NCTC 12954 / NRRL B-1118 / 37Y).